The following is a 188-amino-acid chain: UPF0301 protein azo3459 (188 aa).

It belongs to the UPF0301 (AlgH) family.

In Azoarcus sp. (strain BH72), this protein is UPF0301 protein azo3459.